The chain runs to 460 residues: V-type ATP synthase beta chain (460 aa).

This sequence belongs to the ATPase alpha/beta chains family.

In terms of biological role, produces ATP from ADP in the presence of a proton gradient across the membrane. The V-type beta chain is a regulatory subunit. This chain is V-type ATP synthase beta chain, found in Dictyoglomus turgidum (strain DSM 6724 / Z-1310).